Here is a 270-residue protein sequence, read N- to C-terminus: Orotidine 5'-phosphate decarboxylase (270 aa).

K89 functions as the Proton donor in the catalytic mechanism.

This sequence belongs to the OMP decarboxylase family. Type 2 subfamily.

It carries out the reaction orotidine 5'-phosphate + H(+) = UMP + CO2. Its pathway is pyrimidine metabolism; UMP biosynthesis via de novo pathway; UMP from orotate: step 2/2. The protein is Orotidine 5'-phosphate decarboxylase of Dehalococcoides mccartyi (strain ATCC BAA-2100 / JCM 16839 / KCTC 5957 / BAV1).